A 162-amino-acid polypeptide reads, in one-letter code: Terminase, small subunit (162 aa).

The tract at residues 7-27 is helix-turn-helix (HTH); it reads NRFWEARSSHGRNPKFESPEA. The disordered stretch occupies residues 132 to 162; that stretch reads QVEDVTPDKGDRDKRRSRIKELFNRGTGRDS. Basic and acidic residues predominate over residues 137–162; the sequence is TPDKGDRDKRRSRIKELFNRGTGRDS. Positions 140 to 162 are interaction with the terminase large subunit gp2; that stretch reads KGDRDKRRSRIKELFNRGTGRDS. The DNA-binding element occupies 143-152; that stretch reads RDKRRSRIKE.

It belongs to the P22likvirus small terminase family. As to quaternary structure, homononamer; forms a ring-like structure through which genomic DNA is translocated into the capsid. Interacts with the terminase small subunit; the active complex is composed of dimer of terminase large subunits and a nonamer ring of terminase small subunits.

Its function is as follows. The terminase small subunit binds to the packaging initiation site and regulates the ATPase activity of the terminase large subunit. The terminase lies at a unique vertex of the procapsid and is composed of two subunits, a small terminase subunit involved in viral DNA recognition (packaging 'pac' sequence), and a large terminase subunit possessing endonucleolytic and ATPase activities. Both terminase subunits heterooligomerize and are docked on the portal protein to form the packaging machine. The terminase large subunit exhibits endonuclease activity and cleaves the viral genome concatemer once the capsid is full (headful packaging). Once the capsid is packaged with the DNA, the terminase complex is substituted by neck proteins. This Salmonella typhimurium (Bacteriophage P22) protein is Terminase, small subunit (3).